The chain runs to 245 residues: 1-(5-phosphoribosyl)-5-[(5-phosphoribosylamino)methylideneamino] imidazole-4-carboxamide isomerase (245 aa).

Residue Asp7 is the Proton acceptor of the active site. Asp129 (proton donor) is an active-site residue.

Belongs to the HisA/HisF family.

The protein resides in the cytoplasm. The catalysed reaction is 1-(5-phospho-beta-D-ribosyl)-5-[(5-phospho-beta-D-ribosylamino)methylideneamino]imidazole-4-carboxamide = 5-[(5-phospho-1-deoxy-D-ribulos-1-ylimino)methylamino]-1-(5-phospho-beta-D-ribosyl)imidazole-4-carboxamide. It participates in amino-acid biosynthesis; L-histidine biosynthesis; L-histidine from 5-phospho-alpha-D-ribose 1-diphosphate: step 4/9. The polypeptide is 1-(5-phosphoribosyl)-5-[(5-phosphoribosylamino)methylideneamino] imidazole-4-carboxamide isomerase (Escherichia coli (strain SMS-3-5 / SECEC)).